Reading from the N-terminus, the 676-residue chain is Beta-taxilin (676 aa).

2 disordered regions span residues 1–55 (MEND…DISE) and 71–131 (AASL…EQKL). Polar residues-rich tracts occupy residues 8-25 (EKQQQVTTSPTQDNQGQS) and 34-45 (QPLSPTNQTSAQ). Over residues 75-92 (VEKEGTTAETDKPEKEDV) the composition is skewed to basic and acidic residues. Acidic residues predominate over residues 93-105 (GSMEDAECEDVNE). The span at 106 to 131 (ESEKDKPAPGDASRAKEPSASKEQKL) shows a compositional bias: basic and acidic residues. Residues 157 to 461 (EEKLDLLFKK…LYRKIKQAQL (305 aa)) adopt a coiled-coil conformation. A disordered region spans residues 464–486 (EVNGNDILEEDDDANTNPSSSEQ).

The protein belongs to the taxilin family. As to expression, specifically expressed in skeletal and cardiac muscle.

The protein resides in the cytoplasm. Functionally, promotes neurite-outgrowth. May be involved in intracellular vesicle traffic. The polypeptide is Beta-taxilin (TXLNB) (Gallus gallus (Chicken)).